A 59-amino-acid chain; its full sequence is Cuticle protein 16 isoform D (59 aa).

The chain is Cuticle protein 16 isoform D from Limulus polyphemus (Atlantic horseshoe crab).